The chain runs to 939 residues: Phosphoenolpyruvate carboxylase (939 aa).

Residues His-151 and Lys-593 contribute to the active site.

Belongs to the PEPCase type 1 family. Mg(2+) serves as cofactor.

The catalysed reaction is oxaloacetate + phosphate = phosphoenolpyruvate + hydrogencarbonate. In terms of biological role, forms oxaloacetate, a four-carbon dicarboxylic acid source for the tricarboxylic acid cycle. The sequence is that of Phosphoenolpyruvate carboxylase from Gloeobacter violaceus (strain ATCC 29082 / PCC 7421).